Consider the following 204-residue polypeptide: Superoxide dismutase [Mn] (204 aa).

Mn(2+) is bound by residues H29, H84, D167, and H171.

It belongs to the iron/manganese superoxide dismutase family. Homotetramer. Requires Mn(2+) as cofactor.

The enzyme catalyses 2 superoxide + 2 H(+) = H2O2 + O2. In terms of biological role, destroys superoxide anion radicals which are normally produced within the cells and which are toxic to biological systems. This chain is Superoxide dismutase [Mn] (sodA), found in Thermus thermophilus (strain ATCC BAA-163 / DSM 7039 / HB27).